Consider the following 48-residue polypeptide: ATP synthase protein 8 (48 aa).

The chain crosses the membrane as a helical span at residues 13 to 32 (LTYGFLLMITLLILFSQFFL).

This sequence belongs to the ATPase protein 8 family. F-type ATPases have 2 components, CF(1) - the catalytic core - and CF(0) - the membrane proton channel. In yeast, the dimeric form of ATP synthase consists of 17 polypeptides: alpha, beta, gamma, delta, epsilon, 4 (B), 5 (OSCP), 6 (A), 8, 9 (C), d, E (Tim11), f, g, h, i/j and k.

It is found in the mitochondrion membrane. In terms of biological role, mitochondrial membrane ATP synthase (F(1)F(0) ATP synthase or Complex V) produces ATP from ADP in the presence of a proton gradient across the membrane which is generated by electron transport complexes of the respiratory chain. F-type ATPases consist of two structural domains, F(1) - containing the extramembraneous catalytic core and F(0) - containing the membrane proton channel, linked together by a central stalk and a peripheral stalk. During catalysis, ATP synthesis in the catalytic domain of F(1) is coupled via a rotary mechanism of the central stalk subunits to proton translocation. Part of the complex F(0) domain. Minor subunit located with subunit a in the membrane. The protein is ATP synthase protein 8 (ATP8) of Saccharomyces cerevisiae (strain ATCC 204508 / S288c) (Baker's yeast).